The chain runs to 276 residues: uncharacterized protein (276 aa).

15–22 serves as a coordination point for ATP; it reads GKGGVGKS. 4Fe-4S ferredoxin-type domains are found at residues 68 to 96 and 92 to 121; these read EIYE…DFKI and GDFK…PIKR. Positions 76, 79, 82, 86, 101, 104, 107, and 111 each coordinate [4Fe-4S] cluster.

This is an uncharacterized protein from Methanocaldococcus jannaschii (strain ATCC 43067 / DSM 2661 / JAL-1 / JCM 10045 / NBRC 100440) (Methanococcus jannaschii).